The sequence spans 347 residues: Outer membrane protein A (347 aa).

An N-terminal signal peptide occupies residues 1 to 21 (MKKQALTIIFLLVSLVTGIQA). Transmembrane regions (beta stranded) follow at residues 26 to 36 (HWYLGTKMGWS), 63 to 74 (APVFGLFLGYEF), 78 to 86 (FSFEIENDT), 105 to 116 (NSLQLATKLSYP), 121 to 129 (FHIYTQLGG), 154 to 163 (PNVSLGAEYI), 168 to 175 (FITRLDYT), and 194 to 202 (DVALSFGWK). Residues 207-218 (NINEIFSSYIPQ) form a hinge-like region. The 128-residue stretch at 220–347 (SDKQYVALNE…RRVEIEVLSD (128 aa)) folds into the OmpA-like domain. Cys-321 and Cys-333 are joined by a disulfide.

This sequence belongs to the outer membrane OOP (TC 1.B.6) superfamily. OmpA family. As to quaternary structure, monomer and homodimer.

It is found in the cell outer membrane. Its function is as follows. With TolR probably plays a role in maintaining the position of the peptidoglycan cell wall in the periplasm. Acts as a porin with low permeability that allows slow penetration of small solutes; an internal gate slows down solute passage. This chain is Outer membrane protein A, found in Buchnera aphidicola subsp. Schizaphis graminum (strain Sg).